The following is a 534-amino-acid chain: Peptide chain release factor 3 (534 aa).

The region spanning Ala-9–Gln-278 is the tr-type G domain. GTP is bound by residues Ser-18–Thr-25, Asp-86–His-90, and Asn-140–Asp-143.

This sequence belongs to the TRAFAC class translation factor GTPase superfamily. Classic translation factor GTPase family. PrfC subfamily.

Its subcellular location is the cytoplasm. In terms of biological role, increases the formation of ribosomal termination complexes and stimulates activities of RF-1 and RF-2. It binds guanine nucleotides and has strong preference for UGA stop codons. It may interact directly with the ribosome. The stimulation of RF-1 and RF-2 is significantly reduced by GTP and GDP, but not by GMP. The sequence is that of Peptide chain release factor 3 from Xanthomonas euvesicatoria pv. vesicatoria (strain 85-10) (Xanthomonas campestris pv. vesicatoria).